Here is a 462-residue protein sequence, read N- to C-terminus: UDP-N-acetylmuramoylalanine--D-glutamate ligase (462 aa).

112-118 (GTNGKTT) is an ATP binding site.

This sequence belongs to the MurCDEF family.

Its subcellular location is the cytoplasm. The catalysed reaction is UDP-N-acetyl-alpha-D-muramoyl-L-alanine + D-glutamate + ATP = UDP-N-acetyl-alpha-D-muramoyl-L-alanyl-D-glutamate + ADP + phosphate + H(+). Its pathway is cell wall biogenesis; peptidoglycan biosynthesis. In terms of biological role, cell wall formation. Catalyzes the addition of glutamate to the nucleotide precursor UDP-N-acetylmuramoyl-L-alanine (UMA). The sequence is that of UDP-N-acetylmuramoylalanine--D-glutamate ligase from Nostoc sp. (strain PCC 7120 / SAG 25.82 / UTEX 2576).